The chain runs to 424 residues: Serine--tRNA ligase (424 aa).

Position 232–234 (232–234 (TAE)) interacts with L-serine. 263–265 (RQE) serves as a coordination point for ATP. Glutamate 286 provides a ligand contact to L-serine. 350 to 353 (EIGS) contacts ATP. An L-serine-binding site is contributed by serine 386.

This sequence belongs to the class-II aminoacyl-tRNA synthetase family. Type-1 seryl-tRNA synthetase subfamily. Homodimer. The tRNA molecule binds across the dimer.

It is found in the cytoplasm. It carries out the reaction tRNA(Ser) + L-serine + ATP = L-seryl-tRNA(Ser) + AMP + diphosphate + H(+). The catalysed reaction is tRNA(Sec) + L-serine + ATP = L-seryl-tRNA(Sec) + AMP + diphosphate + H(+). It functions in the pathway aminoacyl-tRNA biosynthesis; selenocysteinyl-tRNA(Sec) biosynthesis; L-seryl-tRNA(Sec) from L-serine and tRNA(Sec): step 1/1. In terms of biological role, catalyzes the attachment of serine to tRNA(Ser). Is also able to aminoacylate tRNA(Sec) with serine, to form the misacylated tRNA L-seryl-tRNA(Sec), which will be further converted into selenocysteinyl-tRNA(Sec). The chain is Serine--tRNA ligase from Aster yellows witches'-broom phytoplasma (strain AYWB).